Reading from the N-terminus, the 331-residue chain is Ketol-acid reductoisomerase (NADP(+)) (331 aa).

Positions 2–182 constitute a KARI N-terminal Rossmann domain; that stretch reads VEIYYDDDAN…GGTRAGALRT (181 aa). Residues 25–28, Ser-51, and Ser-53 each bind NADP(+); that span reads FGSQ. His-108 is a catalytic residue. Residue Gly-134 participates in NADP(+) binding. A KARI C-terminal knotted domain is found at 183-328; the sequence is TFTEETETDL…GKLRPMMSWI (146 aa). The Mg(2+) site is built by Asp-191, Glu-195, Glu-227, and Glu-231. Ser-252 is a binding site for substrate.

The protein belongs to the ketol-acid reductoisomerase family. Mg(2+) is required as a cofactor.

It catalyses the reaction (2R)-2,3-dihydroxy-3-methylbutanoate + NADP(+) = (2S)-2-acetolactate + NADPH + H(+). It carries out the reaction (2R,3R)-2,3-dihydroxy-3-methylpentanoate + NADP(+) = (S)-2-ethyl-2-hydroxy-3-oxobutanoate + NADPH + H(+). It functions in the pathway amino-acid biosynthesis; L-isoleucine biosynthesis; L-isoleucine from 2-oxobutanoate: step 2/4. Its pathway is amino-acid biosynthesis; L-valine biosynthesis; L-valine from pyruvate: step 2/4. In terms of biological role, involved in the biosynthesis of branched-chain amino acids (BCAA). Catalyzes an alkyl-migration followed by a ketol-acid reduction of (S)-2-acetolactate (S2AL) to yield (R)-2,3-dihydroxy-isovalerate. In the isomerase reaction, S2AL is rearranged via a Mg-dependent methyl migration to produce 3-hydroxy-3-methyl-2-ketobutyrate (HMKB). In the reductase reaction, this 2-ketoacid undergoes a metal-dependent reduction by NADPH to yield (R)-2,3-dihydroxy-isovalerate. This is Ketol-acid reductoisomerase (NADP(+)) from Parafrankia sp. (strain EAN1pec).